A 789-amino-acid chain; its full sequence is Ribonucleoside-diphosphate reductase large subunit (789 aa).

Substrate contacts are provided by residues Thr207, 222–223 (SC), Gly253, 435–439 (NLCTE), and 620–624 (PTVSS). A disulfide bond links Cys223 and Cys452. Asn435 acts as the Proton acceptor in catalysis. Catalysis depends on Cys437, which acts as the Cysteine radical intermediate. The Proton acceptor role is filled by Glu439.

It belongs to the ribonucleoside diphosphate reductase large chain family. Heterotetramer composed of a homodimer of the large subunit (R1) and a homodimer of the small subunit (R2). Larger multisubunit protein complex are also active, composed of (R1)n(R2)n.

It catalyses the reaction a 2'-deoxyribonucleoside 5'-diphosphate + [thioredoxin]-disulfide + H2O = a ribonucleoside 5'-diphosphate + [thioredoxin]-dithiol. Its function is as follows. Ribonucleoside-diphosphate reductase holoenzyme provides the precursors necessary for viral DNA synthesis. Allows virus growth in non-dividing cells, as well as reactivation from latency in infected hosts. Catalyzes the biosynthesis of deoxyribonucleotides from the corresponding ribonucleotides. This Equus caballus (Horse) protein is Ribonucleoside-diphosphate reductase large subunit.